The sequence spans 273 residues: 4-hydroxy-tetrahydrodipicolinate reductase (273 aa).

NAD(+) contacts are provided by residues 12-17 (GAGGRM) and Glu-38. Residue Arg-39 coordinates NADP(+). NAD(+) contacts are provided by residues 102-104 (GTT) and 126-129 (AANF). Residue His-159 is the Proton donor/acceptor of the active site. His-160 contributes to the (S)-2,3,4,5-tetrahydrodipicolinate binding site. Lys-163 (proton donor) is an active-site residue. 169–170 (GT) contributes to the (S)-2,3,4,5-tetrahydrodipicolinate binding site.

It belongs to the DapB family. As to quaternary structure, homotetramer.

It localises to the cytoplasm. It carries out the reaction (S)-2,3,4,5-tetrahydrodipicolinate + NAD(+) + H2O = (2S,4S)-4-hydroxy-2,3,4,5-tetrahydrodipicolinate + NADH + H(+). It catalyses the reaction (S)-2,3,4,5-tetrahydrodipicolinate + NADP(+) + H2O = (2S,4S)-4-hydroxy-2,3,4,5-tetrahydrodipicolinate + NADPH + H(+). It functions in the pathway amino-acid biosynthesis; L-lysine biosynthesis via DAP pathway; (S)-tetrahydrodipicolinate from L-aspartate: step 4/4. In terms of biological role, catalyzes the conversion of 4-hydroxy-tetrahydrodipicolinate (HTPA) to tetrahydrodipicolinate. In Salmonella agona (strain SL483), this protein is 4-hydroxy-tetrahydrodipicolinate reductase.